A 542-amino-acid polypeptide reads, in one-letter code: Chaperonin GroEL (542 aa).

Residues 29–32, 86–90, Gly413, 478–480, and Asp494 each bind ATP; these read TLGP, DGTTT, and DAL.

It belongs to the chaperonin (HSP60) family. Forms a cylinder of 14 subunits composed of two heptameric rings stacked back-to-back. Interacts with the co-chaperonin GroES.

The protein localises to the cytoplasm. It carries out the reaction ATP + H2O + a folded polypeptide = ADP + phosphate + an unfolded polypeptide.. Together with its co-chaperonin GroES, plays an essential role in assisting protein folding. The GroEL-GroES system forms a nano-cage that allows encapsulation of the non-native substrate proteins and provides a physical environment optimized to promote and accelerate protein folding. The sequence is that of Chaperonin GroEL from Clostridioides difficile (strain 630) (Peptoclostridium difficile).